The primary structure comprises 250 residues: Probable chemoreceptor glutamine deamidase CheD (250 aa).

The protein belongs to the CheD family.

It carries out the reaction L-glutaminyl-[protein] + H2O = L-glutamyl-[protein] + NH4(+). Probably deamidates glutamine residues to glutamate on methyl-accepting chemotaxis receptors (MCPs), playing an important role in chemotaxis. The protein is Probable chemoreceptor glutamine deamidase CheD of Paraburkholderia xenovorans (strain LB400).